The sequence spans 437 residues: Adenosylhomocysteinase (437 aa).

Substrate contacts are provided by T54, D130, and E155. Residue 156–158 coordinates NAD(+); that stretch reads TTT. Residues K185 and D189 each contribute to the substrate site. NAD(+) is bound by residues N190, 219–224, E242, N277, 298–300, and N345; these read GYGDVG and IGH.

It belongs to the adenosylhomocysteinase family. In terms of assembly, homotetramer. It depends on NAD(+) as a cofactor.

Its subcellular location is the cytoplasm. It catalyses the reaction S-adenosyl-L-homocysteine + H2O = L-homocysteine + adenosine. The protein operates within amino-acid biosynthesis; L-homocysteine biosynthesis; L-homocysteine from S-adenosyl-L-homocysteine: step 1/1. Functionally, adenosylhomocysteine is a competitive inhibitor of S-adenosyl-L-methionine-dependent methyl transferase reactions; therefore adenosylhomocysteinase may play a key role in the control of methylations via regulation of the intracellular concentration of adenosylhomocysteine. This chain is Adenosylhomocysteinase, found in Leishmania donovani.